We begin with the raw amino-acid sequence, 472 residues long: MSIKNAVKLIEKSKARFVDLRFTDTKGKQHHFTVPARIVLEGPEEWFENGQAFDGSSIGGWKGIQASDMQLRPDASTAFVDPFYDDVTVVITCDVIDPADGQGYDRDPRSIARRAEAYLKSSGIGDTAYFGPEPEFFVFDGVEFETDMHKTRYEITSESGAWASGLHMDGQNTGHRPAVKGGYAPVAPIDCGQDLRSAMVNILEGLGIEVEVHHSEVGTGSQMEIGTRFATLVKRADQTQDMKYVIQNVAHNFGKTATFMPKPIMGDNGSGMHVHQSIWKDGQNLFAGDGYAGLSDTALYYIGGIIKHAKALNAITNPSTNSYKRLVPHFEAPTKLAYSAKNRSASIRIPSVNSSKARRIEARFPDPTANPYLAFAALLMAGLDGIQNKIHPGDPADKNLYDLPPEEDALVPTVCASLEEALAALKADHEFLLRGGVFSKDWIDSYIAFKEEDVRRIRMAPHPLEFEMYYSL.

Residues 13 to 101 (SKARFVDLRF…TCDVIDPADG (89 aa)) enclose the GS beta-grasp domain. A GS catalytic domain is found at 108-472 (PRSIARRAEA…PLEFEMYYSL (365 aa)). 2 residues coordinate Mg(2+): glutamate 133 and glutamate 135. Glutamate 211 serves as a coordination point for ATP. Mg(2+) contacts are provided by glutamate 216 and glutamate 224. L-glutamate-binding positions include 268–269 (NG) and glycine 269. Histidine 273 contributes to the Mg(2+) binding site. Residues 275–277 (HQS) and serine 277 each bind ATP. Arginine 325, glutamate 331, and arginine 343 together coordinate L-glutamate. Arginine 343, arginine 348, and lysine 356 together coordinate ATP. Residue glutamate 361 coordinates Mg(2+). Arginine 363 provides a ligand contact to L-glutamate. Tyrosine 401 carries the post-translational modification O-AMP-tyrosine.

It belongs to the glutamine synthetase family. In terms of assembly, oligomer of 12 subunits arranged in the form of two hexameric ring. It depends on Mg(2+) as a cofactor.

It localises to the cytoplasm. The enzyme catalyses L-glutamate + NH4(+) + ATP = L-glutamine + ADP + phosphate + H(+). With respect to regulation, the activity of this enzyme could be controlled by adenylation under conditions of abundant glutamine. In terms of biological role, catalyzes the ATP-dependent biosynthesis of glutamine from glutamate and ammonia. In Neisseria gonorrhoeae, this protein is Glutamine synthetase.